The primary structure comprises 295 residues: Urease accessory protein UreD (295 aa).

This sequence belongs to the UreD family. As to quaternary structure, ureD, UreF and UreG form a complex that acts as a GTP-hydrolysis-dependent molecular chaperone, activating the urease apoprotein by helping to assemble the nickel containing metallocenter of UreC. The UreE protein probably delivers the nickel.

The protein resides in the cytoplasm. Its function is as follows. Required for maturation of urease via the functional incorporation of the urease nickel metallocenter. In Ralstonia nicotianae (strain ATCC BAA-1114 / GMI1000) (Ralstonia solanacearum), this protein is Urease accessory protein UreD.